Here is a 401-residue protein sequence, read N- to C-terminus: tRNA N6-adenosine threonylcarbamoyltransferase (401 aa).

Residues H111 and H115 each coordinate Fe cation. Residues 191–195, D223, G236, and N336 contribute to the substrate site; that span reads LASGG. D364 serves as a coordination point for Fe cation.

Belongs to the KAE1 / TsaD family. Requires Fe(2+) as cofactor.

Its subcellular location is the cytoplasm. It catalyses the reaction L-threonylcarbamoyladenylate + adenosine(37) in tRNA = N(6)-L-threonylcarbamoyladenosine(37) in tRNA + AMP + H(+). In terms of biological role, required for the formation of a threonylcarbamoyl group on adenosine at position 37 (t(6)A37) in tRNAs that read codons beginning with adenine. Is involved in the transfer of the threonylcarbamoyl moiety of threonylcarbamoyl-AMP (TC-AMP) to the N6 group of A37, together with TsaE and TsaB. TsaD likely plays a direct catalytic role in this reaction. The sequence is that of tRNA N6-adenosine threonylcarbamoyltransferase from Tropheryma whipplei (strain TW08/27) (Whipple's bacillus).